Here is an 80-residue protein sequence, read N- to C-terminus: Exodeoxyribonuclease 7 small subunit (80 aa).

Belongs to the XseB family. Heterooligomer composed of large and small subunits.

It is found in the cytoplasm. It carries out the reaction Exonucleolytic cleavage in either 5'- to 3'- or 3'- to 5'-direction to yield nucleoside 5'-phosphates.. Functionally, bidirectionally degrades single-stranded DNA into large acid-insoluble oligonucleotides, which are then degraded further into small acid-soluble oligonucleotides. The sequence is that of Exodeoxyribonuclease 7 small subunit from Escherichia coli O6:K15:H31 (strain 536 / UPEC).